Consider the following 147-residue polypeptide: Cyanate hydratase (147 aa).

Active-site residues include Arg88, Glu91, and Ser114.

It belongs to the cyanase family.

It catalyses the reaction cyanate + hydrogencarbonate + 3 H(+) = NH4(+) + 2 CO2. Functionally, catalyzes the reaction of cyanate with bicarbonate to produce ammonia and carbon dioxide. The polypeptide is Cyanate hydratase (Prochlorococcus marinus subsp. pastoris (strain CCMP1986 / NIES-2087 / MED4)).